A 238-amino-acid chain; its full sequence is Flagellar L-ring protein (238 aa).

The signal sequence occupies residues 1 to 16 (MNKAILAVAMVLLLAG). Cys17 is lipidated: N-palmitoyl cysteine. Cys17 carries S-diacylglycerol cysteine lipidation.

This sequence belongs to the FlgH family. In terms of assembly, the basal body constitutes a major portion of the flagellar organelle and consists of four rings (L,P,S, and M) mounted on a central rod.

It is found in the cell outer membrane. It localises to the bacterial flagellum basal body. Functionally, assembles around the rod to form the L-ring and probably protects the motor/basal body from shearing forces during rotation. This chain is Flagellar L-ring protein, found in Brucella canis (strain ATCC 23365 / NCTC 10854 / RM-666).